The chain runs to 204 residues: High frequency lysogenization protein HflD homolog (204 aa).

Belongs to the HflD family.

The protein localises to the cytoplasm. It localises to the cell inner membrane. In Shewanella woodyi (strain ATCC 51908 / MS32), this protein is High frequency lysogenization protein HflD homolog.